We begin with the raw amino-acid sequence, 63 residues long: Large ribosomal subunit protein bL28 (63 aa).

This sequence belongs to the bacterial ribosomal protein bL28 family.

The protein is Large ribosomal subunit protein bL28 of Brachyspira hyodysenteriae (strain ATCC 49526 / WA1).